The primary structure comprises 171 residues: ATP synthase subunit b (171 aa).

A helical transmembrane segment spans residues 12–34; the sequence is FGLNLNLFETNVINLAVVIFGLY.

It belongs to the ATPase B chain family. As to quaternary structure, F-type ATPases have 2 components, F(1) - the catalytic core - and F(0) - the membrane proton channel. F(1) has five subunits: alpha(3), beta(3), gamma(1), delta(1), epsilon(1). F(0) has four main subunits: a(1), b(1), b'(1) and c(10-14). The alpha and beta chains form an alternating ring which encloses part of the gamma chain. F(1) is attached to F(0) by a central stalk formed by the gamma and epsilon chains, while a peripheral stalk is formed by the delta, b and b' chains.

It is found in the cellular thylakoid membrane. Its function is as follows. F(1)F(0) ATP synthase produces ATP from ADP in the presence of a proton or sodium gradient. F-type ATPases consist of two structural domains, F(1) containing the extramembraneous catalytic core and F(0) containing the membrane proton channel, linked together by a central stalk and a peripheral stalk. During catalysis, ATP synthesis in the catalytic domain of F(1) is coupled via a rotary mechanism of the central stalk subunits to proton translocation. In terms of biological role, component of the F(0) channel, it forms part of the peripheral stalk, linking F(1) to F(0). In Prochlorococcus marinus (strain MIT 9211), this protein is ATP synthase subunit b.